Reading from the N-terminus, the 489-residue chain is Glutamate--tRNA ligase (489 aa).

The 'HIGH' region motif lies at 12–22; that stretch reads PSPTGIPHVGM. The 'KMSKS' region motif lies at 256–260; that stretch reads KLSKR. Lys-259 provides a ligand contact to ATP.

It belongs to the class-I aminoacyl-tRNA synthetase family. Glutamate--tRNA ligase type 1 subfamily. In terms of assembly, monomer.

The protein localises to the cytoplasm. The enzyme catalyses tRNA(Glu) + L-glutamate + ATP = L-glutamyl-tRNA(Glu) + AMP + diphosphate. Catalyzes the attachment of glutamate to tRNA(Glu) in a two-step reaction: glutamate is first activated by ATP to form Glu-AMP and then transferred to the acceptor end of tRNA(Glu). This Mycobacterium ulcerans (strain Agy99) protein is Glutamate--tRNA ligase.